Consider the following 494-residue polypeptide: Alpha-amylase-related protein (494 aa).

The N-terminal stretch at 1-20 is a signal peptide; it reads MIKFALALTLCLAGASLSLA. Gln-21 bears the Pyrrolidone carboxylic acid mark. Cys-48 and Cys-104 are disulfide-bonded. 3 residues coordinate Ca(2+): Asn-118, Gln-169, and Asp-178. A disulfide bridge links Cys-157 with Cys-171. Arg-206 provides a ligand contact to chloride. The active-site Nucleophile is Asp-208. His-212 contributes to the Ca(2+) binding site. Glu-245 acts as the Proton donor in catalysis. Chloride is bound by residues Asn-308 and Arg-343. Intrachain disulfides connect Cys-376-Cys-382, Cys-418-Cys-441, and Cys-448-Cys-460.

Belongs to the glycosyl hydrolase 13 family. As to quaternary structure, monomer. Ca(2+) serves as cofactor. Chloride is required as a cofactor.

It localises to the secreted. The enzyme catalyses Endohydrolysis of (1-&gt;4)-alpha-D-glucosidic linkages in polysaccharides containing three or more (1-&gt;4)-alpha-linked D-glucose units.. The protein is Alpha-amylase-related protein (Amyrel) of Drosophila serrata (Fruit fly).